The following is a 209-amino-acid chain: Ribosomal RNA small subunit methyltransferase G (209 aa).

S-adenosyl-L-methionine is bound by residues Gly-72, Leu-77, 123–124 (AE), and Arg-138.

This sequence belongs to the methyltransferase superfamily. RNA methyltransferase RsmG family.

The protein localises to the cytoplasm. Its function is as follows. Specifically methylates the N7 position of guanine in position 518 of 16S rRNA. In Leifsonia xyli subsp. xyli (strain CTCB07), this protein is Ribosomal RNA small subunit methyltransferase G.